Here is a 74-residue protein sequence, read N- to C-terminus: DNA-directed RNA polymerase subunit omega (74 aa).

The protein belongs to the RNA polymerase subunit omega family. In terms of assembly, the RNAP catalytic core consists of 2 alpha, 1 beta, 1 beta' and 1 omega subunit. When a sigma factor is associated with the core the holoenzyme is formed, which can initiate transcription.

It carries out the reaction RNA(n) + a ribonucleoside 5'-triphosphate = RNA(n+1) + diphosphate. In terms of biological role, promotes RNA polymerase assembly. Latches the N- and C-terminal regions of the beta' subunit thereby facilitating its interaction with the beta and alpha subunits. In Helicobacter pylori (strain Shi470), this protein is DNA-directed RNA polymerase subunit omega.